Here is a 103-residue protein sequence, read N- to C-terminus: Co-chaperonin GroES (103 aa).

It belongs to the GroES chaperonin family. In terms of assembly, heptamer of 7 subunits arranged in a ring. Interacts with the chaperonin GroEL.

The protein localises to the plastid. The protein resides in the cyanelle. Together with the chaperonin GroEL, plays an essential role in assisting protein folding. The GroEL-GroES system forms a nano-cage that allows encapsulation of the non-native substrate proteins and provides a physical environment optimized to promote and accelerate protein folding. GroES binds to the apical surface of the GroEL ring, thereby capping the opening of the GroEL channel. In Cyanophora paradoxa, this protein is Co-chaperonin GroES.